The chain runs to 131 residues: Holo-[acyl-carrier-protein] synthase (131 aa).

Residues Asp-8 and Glu-59 each contribute to the Mg(2+) site.

It belongs to the P-Pant transferase superfamily. AcpS family. The cofactor is Mg(2+).

Its subcellular location is the cytoplasm. It catalyses the reaction apo-[ACP] + CoA = holo-[ACP] + adenosine 3',5'-bisphosphate + H(+). Its function is as follows. Transfers the 4'-phosphopantetheine moiety from coenzyme A to a Ser of acyl-carrier-protein. This chain is Holo-[acyl-carrier-protein] synthase, found in Rickettsia rickettsii (strain Iowa).